Here is a 141-residue protein sequence, read N- to C-terminus: Transcription antitermination protein NusB (141 aa).

It belongs to the NusB family.

Its function is as follows. Involved in transcription antitermination. Required for transcription of ribosomal RNA (rRNA) genes. Binds specifically to the boxA antiterminator sequence of the ribosomal RNA (rrn) operons. This Neisseria meningitidis serogroup C (strain 053442) protein is Transcription antitermination protein NusB.